Consider the following 197-residue polypeptide: Recombination protein RecR (197 aa).

The C4-type zinc finger occupies Cys57–Cys72. The 96-residue stretch at Gly79–Pro174 folds into the Toprim domain.

The protein belongs to the RecR family.

In terms of biological role, may play a role in DNA repair. It seems to be involved in an RecBC-independent recombinational process of DNA repair. It may act with RecF and RecO. This chain is Recombination protein RecR, found in Pelobacter propionicus (strain DSM 2379 / NBRC 103807 / OttBd1).